A 248-amino-acid polypeptide reads, in one-letter code: tRNA pseudouridine synthase A (248 aa).

Aspartate 53 functions as the Nucleophile in the catalytic mechanism. Tyrosine 111 contacts substrate.

Belongs to the tRNA pseudouridine synthase TruA family. As to quaternary structure, homodimer.

The catalysed reaction is uridine(38/39/40) in tRNA = pseudouridine(38/39/40) in tRNA. Formation of pseudouridine at positions 38, 39 and 40 in the anticodon stem and loop of transfer RNAs. The polypeptide is tRNA pseudouridine synthase A (Listeria monocytogenes serovar 1/2a (strain ATCC BAA-679 / EGD-e)).